The primary structure comprises 71 residues: Exodeoxyribonuclease 7 small subunit (71 aa).

It belongs to the XseB family. Heterooligomer composed of large and small subunits.

It localises to the cytoplasm. The catalysed reaction is Exonucleolytic cleavage in either 5'- to 3'- or 3'- to 5'-direction to yield nucleoside 5'-phosphates.. In terms of biological role, bidirectionally degrades single-stranded DNA into large acid-insoluble oligonucleotides, which are then degraded further into small acid-soluble oligonucleotides. The protein is Exodeoxyribonuclease 7 small subunit of Endomicrobium trichonymphae.